The chain runs to 408 residues: Putative agmatinase 3 (408 aa).

A signal peptide spans 1-21 (MKSVEWFTWGVFLLLSGFGEA). Mn(2+)-binding residues include H198, D222, H224, D226, D319, and D321.

The protein belongs to the arginase family. Mn(2+) is required as a cofactor.

The catalysed reaction is agmatine + H2O = urea + putrescine. The protein is Putative agmatinase 3 of Schizosaccharomyces pombe (strain 972 / ATCC 24843) (Fission yeast).